Reading from the N-terminus, the 328-residue chain is G2/mitotic-specific cyclin-2 (328 aa).

Belongs to the cyclin family. Cyclin AB subfamily. In terms of assembly, interacts with the CDC2 protein kinase to form a serine/threonine kinase holoenzyme complex also known as maturation promoting factor (MPF). The cyclin subunit imparts substrate specificity to the complex. In terms of tissue distribution, only expressed in organs with dividing cells.

Essential for the control of the cell cycle at the G2/M (mitosis) transition. This Medicago sativa (Alfalfa) protein is G2/mitotic-specific cyclin-2.